Consider the following 714-residue polypeptide: MKDVGSLTEAEAANELMRLAKQIAHHNKLYHAEDSPEISDADYDALVRRNTAIEEAFPHLIRADSPNRLVGAAVEASPLAKVTHAQRMMSLDNAFAAEDVEEFAARVRRFLNLDEGEPLAFTAEDKIDGLSCSLRYEKGVLVQAATRGDGTVGEDVTPNVRTIADIPQNLKGDIPDIFEIRGEVYMAKADFAALNARLLAEADDPDKARQFANPRNAAAGSLRQKDASVTASRPLRFLAHGWGEVSALPADTQYAVMKAIESWGVPVSPLLKRCDGVADLLDHYRMIEAERAELPYDIDGVVYKVDRLDWQARLGFVARAPRWAIAHKFPAERAQTTLEAIDIQVGRTGKLTPVGRLTPVTVGGVVVSNVTLHNRDEIARLGVRPGDRIIVQRAGDVIPQVVENLTRDEPREPYVFPDHCPVCGSEAVAEDGEVDVRCTGGLICNAQKFERLRHFVSRGALDIEGLGEKSIAEFLELGWLEKGPADIFRLKSHREELLAREGWKERSVDNLLAAIEAKRQPDAARLLFGLGIRHVGAVTARDLLKGIGDIARLPGKAAELRAWVEANPRIEGESEGKYAARRLEAIKAILDVRADGIGPAVAEALGDFFHEPHNRVLWDDLLSEVSPPPYVVETRDSEVSGKTVVFTGKLETMSRDEAKAQAEALGAKAAGSVSAKTDLVVAGPGAGSKLKQAASLGIRVIDEAEWAAIVAAAG.

Residues 40-44 (DADYD), 90-91 (SL), and Glu124 contribute to the NAD(+) site. Lys126 (N6-AMP-lysine intermediate) is an active-site residue. NAD(+)-binding residues include Arg147, Glu183, Lys304, and Lys328. Zn(2+) contacts are provided by Cys420, Cys423, Cys438, and Cys444. Residues 634 to 714 (TRDSEVSGKT…EWAAIVAAAG (81 aa)) form the BRCT domain.

The protein belongs to the NAD-dependent DNA ligase family. LigA subfamily. The cofactor is Mg(2+). Mn(2+) is required as a cofactor.

The enzyme catalyses NAD(+) + (deoxyribonucleotide)n-3'-hydroxyl + 5'-phospho-(deoxyribonucleotide)m = (deoxyribonucleotide)n+m + AMP + beta-nicotinamide D-nucleotide.. Its function is as follows. DNA ligase that catalyzes the formation of phosphodiester linkages between 5'-phosphoryl and 3'-hydroxyl groups in double-stranded DNA using NAD as a coenzyme and as the energy source for the reaction. It is essential for DNA replication and repair of damaged DNA. The chain is DNA ligase from Sphingopyxis alaskensis (strain DSM 13593 / LMG 18877 / RB2256) (Sphingomonas alaskensis).